Reading from the N-terminus, the 121-residue chain is Large ribosomal subunit protein uL18 (121 aa).

Belongs to the universal ribosomal protein uL18 family. As to quaternary structure, part of the 50S ribosomal subunit; part of the 5S rRNA/L5/L18/L25 subcomplex. Contacts the 5S and 23S rRNAs.

This is one of the proteins that bind and probably mediate the attachment of the 5S RNA into the large ribosomal subunit, where it forms part of the central protuberance. The polypeptide is Large ribosomal subunit protein uL18 (Thermoanaerobacter pseudethanolicus (strain ATCC 33223 / 39E) (Clostridium thermohydrosulfuricum)).